The chain runs to 163 residues: Probable ribosome biogenesis protein RLP24 (163 aa).

Belongs to the eukaryotic ribosomal protein eL24 family. In terms of assembly, associated with nucleolar and cytoplasmic pre-60S particles. At the end of biogenesis it dissociates from cytoplasmic pre-60S particles and is likely to be exchanged for its ribosomal homolog, RPL24.

The protein localises to the nucleus. It localises to the nucleolus. Functionally, involved in the biogenesis of the 60S ribosomal subunit. Ensures the docking of GTPBP4/NOG1 to pre-60S particles. The sequence is that of Probable ribosome biogenesis protein RLP24 (Rsl24d1) from Mus musculus (Mouse).